A 397-amino-acid polypeptide reads, in one-letter code: Ubiquitin-like modifier-activating enzyme 5 (397 aa).

ATP contacts are provided by Gly-76, Asp-97, Lys-120, Asn-143, and Asn-177. Residues Cys-219 and Cys-222 each contribute to the Zn(2+) site. Cys-243 (glycyl thioester intermediate) is an active-site residue. Residues Cys-296 and Cys-301 each coordinate Zn(2+). Residues 343-384 (PSDAPTDLSQSTDVGQGLRLAYEAPEKSSAEATQAATAPVDD) form a disordered region.

This sequence belongs to the ubiquitin-activating E1 family. UBA5 subfamily.

Its function is as follows. E1-like enzyme which activates UFM1. The sequence is that of Ubiquitin-like modifier-activating enzyme 5 from Drosophila pseudoobscura pseudoobscura (Fruit fly).